The chain runs to 77 residues: Translation initiation factor IF-1, chloroplastic (77 aa).

Residues 1 to 71 (MKEQKWIHEG…TRGRIIYRLR (71 aa)) form the S1-like domain.

It belongs to the IF-1 family. Component of the 30S ribosomal translation pre-initiation complex which assembles on the 30S ribosome in the order IF-2 and IF-3, IF-1 and N-formylmethionyl-tRNA(fMet); mRNA recruitment can occur at any time during PIC assembly.

The protein resides in the plastid. It localises to the chloroplast. In terms of biological role, one of the essential components for the initiation of protein synthesis. Stabilizes the binding of IF-2 and IF-3 on the 30S subunit to which N-formylmethionyl-tRNA(fMet) subsequently binds. Helps modulate mRNA selection, yielding the 30S pre-initiation complex (PIC). Upon addition of the 50S ribosomal subunit IF-1, IF-2 and IF-3 are released leaving the mature 70S translation initiation complex. The polypeptide is Translation initiation factor IF-1, chloroplastic (Daucus carota (Wild carrot)).